A 112-amino-acid chain; its full sequence is Putative pterin-4-alpha-carbinolamine dehydratase (112 aa).

It belongs to the pterin-4-alpha-carbinolamine dehydratase family.

The enzyme catalyses (4aS,6R)-4a-hydroxy-L-erythro-5,6,7,8-tetrahydrobiopterin = (6R)-L-erythro-6,7-dihydrobiopterin + H2O. The sequence is that of Putative pterin-4-alpha-carbinolamine dehydratase from Syntrophotalea carbinolica (strain DSM 2380 / NBRC 103641 / GraBd1) (Pelobacter carbinolicus).